The primary structure comprises 209 residues: Kynurenine formamidase (209 aa).

Substrate is bound at residue W20. Residues H50, H54, and D56 each coordinate Zn(2+). H60 (proton donor/acceptor) is an active-site residue. Residues H161 and E173 each contribute to the Zn(2+) site.

This sequence belongs to the Cyclase 1 superfamily. KynB family. Homodimer. The cofactor is Zn(2+).

The catalysed reaction is N-formyl-L-kynurenine + H2O = L-kynurenine + formate + H(+). Its pathway is amino-acid degradation; L-tryptophan degradation via kynurenine pathway; L-kynurenine from L-tryptophan: step 2/2. Catalyzes the hydrolysis of N-formyl-L-kynurenine to L-kynurenine, the second step in the kynurenine pathway of tryptophan degradation. In Bacillus thuringiensis (strain Al Hakam), this protein is Kynurenine formamidase.